The primary structure comprises 550 residues: Chaperonin GroEL (550 aa).

ATP-binding positions include 30 to 33, Lys-51, 87 to 91, Gly-415, and Asp-495; these read TLGP and DGTTT.

This sequence belongs to the chaperonin (HSP60) family. In terms of assembly, forms a cylinder of 14 subunits composed of two heptameric rings stacked back-to-back. Interacts with the co-chaperonin GroES.

The protein localises to the cytoplasm. It carries out the reaction ATP + H2O + a folded polypeptide = ADP + phosphate + an unfolded polypeptide.. Its function is as follows. Together with its co-chaperonin GroES, plays an essential role in assisting protein folding. The GroEL-GroES system forms a nano-cage that allows encapsulation of the non-native substrate proteins and provides a physical environment optimized to promote and accelerate protein folding. The sequence is that of Chaperonin GroEL from Shewanella woodyi (strain ATCC 51908 / MS32).